Reading from the N-terminus, the 283-residue chain is Homeobox protein Hox-A9a (283 aa).

2 disordered regions span residues 25–54 (VPRYSAGPGHQHSRQPASIGDPHSELGTCS) and 162–181 (EKDAVSSHTGDGVDTEEKPG). The segment at residues 216–275 (TRKKRCPYTKHQILELEKEFLFNTYLTRDRRYEVARLLNLTERQVKIWFQNRRMKMKKFN) is a DNA-binding region (homeobox).

Belongs to the Abd-B homeobox family.

It localises to the nucleus. Functionally, sequence-specific transcription factor which is part of a developmental regulatory system that provides cells with specific positional identities on the anterior-posterior axis. The protein is Homeobox protein Hox-A9a (hoxa9a) of Takifugu rubripes (Japanese pufferfish).